A 556-amino-acid polypeptide reads, in one-letter code: Glutamine--tRNA ligase (556 aa).

The 'HIGH' region signature appears at 33–43 (PEPNGYLHIGH). Residues 34-36 (EPN) and 40-46 (HIGHAKS) contribute to the ATP site. L-glutamine contacts are provided by Asp-66 and Tyr-210. ATP is bound by residues Thr-229, 259 to 260 (RL), and 267 to 269 (MSK). The 'KMSKS' region motif lies at 266–270 (VMSKR).

Belongs to the class-I aminoacyl-tRNA synthetase family. As to quaternary structure, monomer.

It localises to the cytoplasm. It carries out the reaction tRNA(Gln) + L-glutamine + ATP = L-glutaminyl-tRNA(Gln) + AMP + diphosphate. The sequence is that of Glutamine--tRNA ligase from Clostridium kluyveri (strain ATCC 8527 / DSM 555 / NBRC 12016 / NCIMB 10680 / K1).